We begin with the raw amino-acid sequence, 368 residues long: Chorismate synthase (368 aa).

R46 lines the NADP(+) pocket. FMN is bound by residues 123-125 (RSS), 240-241 (NA), G285, 300-304 (KPTPT), and R326.

The protein belongs to the chorismate synthase family. Homotetramer. Requires FMNH2 as cofactor.

It carries out the reaction 5-O-(1-carboxyvinyl)-3-phosphoshikimate = chorismate + phosphate. It participates in metabolic intermediate biosynthesis; chorismate biosynthesis; chorismate from D-erythrose 4-phosphate and phosphoenolpyruvate: step 7/7. Its function is as follows. Catalyzes the anti-1,4-elimination of the C-3 phosphate and the C-6 proR hydrogen from 5-enolpyruvylshikimate-3-phosphate (EPSP) to yield chorismate, which is the branch point compound that serves as the starting substrate for the three terminal pathways of aromatic amino acid biosynthesis. This reaction introduces a second double bond into the aromatic ring system. In Porphyromonas gingivalis (strain ATCC BAA-308 / W83), this protein is Chorismate synthase.